The chain runs to 1179 residues: MTGQLVQYGRHRQRRSYARINEVLELPNLIEIQTASYDWFLEEGLREMFQDISPIEDFTGNLSLEFVDYSLGDPKYPVDEAKERDVTYNAPLRVKVRLINNETGEVKEQEVFMGDFPLMTETGTFIINGAERVIVSQLVRSPSVYYNEKIDKNGKRGIGATVIPNRGAWLEFETDAKDIAYVRIDRTRKLPITVLLRALGFGTDQEITDLLGENEYLRNTLEKDNTENAEKALLEIYERLRPGEPPTVENAKSLLVSRFFDPKRYDLAHVGRYKMNKKLHMKNRLFNQILAEPIVDPETGEVIAEKGEKLERKLLDKILPYLERAEDRFGESVLSPHEGVLEDEITIQSVKIIDPTDPNGERELTVIGNGGVTNDVKNITPADILSSISYFFNLLHEVGGTDDIDHLGNRRLRSVGELLQNQFRIGLSRMERVVRERMSIQDTSSVTPQQLINIRPVIASIKEFFGSSQLSQFMDQTNPLGELTHKRRLSALGPGGLTRERAGFEVRDVHYSHYGRMCPIETPEGPNIGLINSLSSYAKVNKFGFIESPYRRVDPETGKVTNKIDYLTADEQDNYIVAQANSPLDEDSRFQNEEVISRFQEDNIVVSRDKIDYMDVSPKQVVSAATACIPFLENDDSNRALMGANMQRQAVPLMKPQAPIVGTGMEYVNGKDSGAAVICHHDGVIERVEAKEVYVRRISIVDGKEVEGDLDRYGLQKYKRSNQGTCYNQRPIVSQGDRVTKGEVLADGPSMEDGELALGQNVLVGFMTWEGYNYEDAIIMSERLVKDDVYTSIHIEEFESEARDTKLGPEEITRDIPNVGEDALKNLDEHGIIRVGAEVTDGDILVGKVTPKGVTELSAEERLLHAIFGEKAREVRDTSLRVPHGGGGIVLDVKIFNREDGDELPPGVNQLVRAYIVQKRKIHEGDKMAGRHGNKGVISKILPEEDMPYLPDGTPIDIMLNPLGVPSRMNIGQVFELHLGMAARQLGIHVASPVFDGAREEDVWETLEEAGMPRDAKTVLYDGRTGEAFDNRVSVGVMYMIKLAHMVDDKLHARSTGPYSLVTQQPLGGKAQFGGQRFGEMEVWALEAYGAAYTLQEILTVKSDDTVGRVKTYEAIVKGDNVPEPGVPESFKVLIKELQSLGMDVKMLSSNEDEIDMRELEEEEVQAATKLNIDVEESE.

Belongs to the RNA polymerase beta chain family. The RNAP catalytic core consists of 2 alpha, 1 beta, 1 beta' and 1 omega subunit. When a sigma factor is associated with the core the holoenzyme is formed, which can initiate transcription.

The enzyme catalyses RNA(n) + a ribonucleoside 5'-triphosphate = RNA(n+1) + diphosphate. DNA-dependent RNA polymerase catalyzes the transcription of DNA into RNA using the four ribonucleoside triphosphates as substrates. In Oceanobacillus iheyensis (strain DSM 14371 / CIP 107618 / JCM 11309 / KCTC 3954 / HTE831), this protein is DNA-directed RNA polymerase subunit beta.